The primary structure comprises 253 residues: 5'/3'-nucleotidase SurE (253 aa).

A divalent metal cation is bound by residues Asp8, Asp9, Ser39, and Asn92.

Belongs to the SurE nucleotidase family. A divalent metal cation serves as cofactor.

It is found in the cytoplasm. It catalyses the reaction a ribonucleoside 5'-phosphate + H2O = a ribonucleoside + phosphate. The catalysed reaction is a ribonucleoside 3'-phosphate + H2O = a ribonucleoside + phosphate. The enzyme catalyses [phosphate](n) + H2O = [phosphate](n-1) + phosphate + H(+). Nucleotidase with a broad substrate specificity as it can dephosphorylate various ribo- and deoxyribonucleoside 5'-monophosphates and ribonucleoside 3'-monophosphates with highest affinity to 3'-AMP. Also hydrolyzes polyphosphate (exopolyphosphatase activity) with the preference for short-chain-length substrates (P20-25). Might be involved in the regulation of dNTP and NTP pools, and in the turnover of 3'-mononucleotides produced by numerous intracellular RNases (T1, T2, and F) during the degradation of various RNAs. This Escherichia coli O7:K1 (strain IAI39 / ExPEC) protein is 5'/3'-nucleotidase SurE.